The sequence spans 474 residues: Cbb3-type cytochrome c oxidase subunit CcoN1 (474 aa).

The Cytoplasmic segment spans residues 1 to 16; the sequence is MNTATSTAYSYKVVRQ. A helical membrane pass occupies residues 17-37; the sequence is FAIMTVVWGIVGMGLGVFIAA. The Periplasmic segment spans residues 38–60; it reads QLAWPFLNFDLPWTSFGRLRPLH. Heme b is bound at residue histidine 60. The helical transmembrane segment at 61–81 threads the bilayer; it reads TNAVIFAFGGCALFATSYYSV. The Cytoplasmic portion of the chain corresponds to 82–96; the sequence is QRTCQTTLFAPKLAA. Residues 97 to 117 form a helical membrane-spanning segment; that stretch reads FTFWGWQLVILLAAISLPLGF. The Periplasmic segment spans residues 118–129; sequence TSSKEYAELEWP. Residues 130-150 traverse the membrane as a helical segment; sequence IDILITIVWVAYAVVFFGTLA. Topologically, residues 151 to 156 are cytoplasmic; the sequence is KRKVKH. Residues 157–177 traverse the membrane as a helical segment; sequence IYVGNWFFGAFILTVAILHVV. The Periplasmic portion of the chain corresponds to 178–205; the sequence is NNLEIPVTAMKSYSLYAGATDAMVQWWY. A helical transmembrane segment spans residues 206–226; it reads GHNAVGFFLTAGFLGIMYYFV. Histidine 207 is a binding site for Cu cation. Topologically, residues 227-238 are cytoplasmic; it reads PKQAERPVYSYR. A helical membrane pass occupies residues 239-259; the sequence is LSIVHFWALITVYIWAGPHHL. Cu cation contacts are provided by histidine 257 and histidine 258. The Periplasmic portion of the chain corresponds to 260-270; sequence HYTALPDWAQS. Residues 271–291 form a helical membrane-spanning segment; sequence LGMVMSLILLAPSWGGMINGM. At 292 to 308 the chain is on the cytoplasmic side; that stretch reads MTLSGAWHKLRSDPILR. A helical transmembrane segment spans residues 309 to 329; the sequence is FLVVSLAFYGMSTFEGPMMAI. At 330–345 the chain is on the periplasmic side; sequence KTVNALSHYTDWTIGH. Residues histidine 345 and histidine 347 each contribute to the heme b site. The chain crosses the membrane as a helical span at residues 346–366; the sequence is VHAGALGWVAMVSIGALYHLV. Topologically, residues 367 to 384 are cytoplasmic; it reads PKVFGREQMHSIGLINTH. Residues 385-405 traverse the membrane as a helical segment; it reads FWLATIGTVLYIASMWVNGIA. Residues 406-432 lie on the Periplasmic side of the membrane; that stretch reads QGLMWRAINDDGTLTYSFVESLEASHP. Residues 433–453 traverse the membrane as a helical segment; sequence GFVVRMIGGAIFFAGMLVMAY. Residues 454–474 are Cytoplasmic-facing; the sequence is NTWRTVQAAKPAEYDAAAQIA.

It belongs to the heme-copper respiratory oxidase family. In terms of assembly, component of the cbb3-type cytochrome c oxidase at least composed of CcoN, CcoO, CcoQ and CcoP. It depends on Cu(2+) as a cofactor. The cofactor is heme b.

It localises to the cell inner membrane. It catalyses the reaction 4 Fe(II)-[cytochrome c] + O2 + 8 H(+)(in) = 4 Fe(III)-[cytochrome c] + 2 H2O + 4 H(+)(out). The protein operates within energy metabolism; oxidative phosphorylation. Functionally, cbb3-type cytochrome c oxidase is the component of the respiratory chain that catalyzes the reduction of oxygen to water. Subunits CcoN and CcoO form the functional core of the enzyme complex. Subunits CcoP and CcoQ may optionally bind to the core. CcoN is the catalytic subunit of the enzyme. Electrons originating in cytochrome c or a quinol are transferred to the bimetallic center formed by a high-spin heme and copper B. The complex also functions as a proton pump. The polypeptide is Cbb3-type cytochrome c oxidase subunit CcoN1 (Stutzerimonas stutzeri (Pseudomonas stutzeri)).